The sequence spans 304 residues: MVERKPVFVDWCPGCGDFGILRAEEMAIRELGINPKSVVIVSGIGCSGKIPHFMNLPISGVHTLHGRSIAFATGIKLSNPSLEVIVNVGDGDGLGIGMGHFVHLGRRNIDIAVLVHNNGVYGLTKGQASPTLHRGEKTKSLPKPNIMDAVNPLAVALAAGYTFVARGYAYDVMHLKELIKKAILHKGSALVDILQPCPTYNDINTKEWYDKRVYKLDNVPGWDPVVRKEEEAQKKFEQAIMKSYEWGEKIPIGIFYQNELVPTFEDRLTSNIPNYREYYPAKQQIEINGISTTKIDELIKAKRI.

[4Fe-4S] cluster-binding residues include Cys12, Cys15, and Cys46. Residues 44-47 and His65 contribute to the thiamine diphosphate site; that span reads IGCS. Asp90 is a binding site for Mg(2+). A thiamine diphosphate-binding site is contributed by 91–92; it reads GD. Mg(2+) contacts are provided by Asn118 and Val120. 122 to 123 contributes to the thiamine diphosphate binding site; that stretch reads GL. Cys197 contributes to the [4Fe-4S] cluster binding site.

Heterodimer composed of an alpha and a beta subunit. Requires [4Fe-4S] cluster as cofactor. Thiamine diphosphate serves as cofactor. It depends on Mg(2+) as a cofactor.

It catalyses the reaction a 2-oxocarboxylate + 2 oxidized [2Fe-2S]-[ferredoxin] + CoA = an acyl-CoA + 2 reduced [2Fe-2S]-[ferredoxin] + CO2 + H(+). Its function is as follows. Catalyzes the coenzyme A-dependent oxidative decarboxylation of different 2-oxoacids such as 2-oxoglutarate, pyruvate and 2-oxobutyrate to form their CoA derivatives. The protein is 2-oxoacid:ferredoxin oxidoreductase 2, subunit beta of Sulfurisphaera tokodaii (strain DSM 16993 / JCM 10545 / NBRC 100140 / 7) (Sulfolobus tokodaii).